Consider the following 433-residue polypeptide: MLVTRPLLSPEWVARLKQFKKLIVGFSGGLDSTVLLHVLASTPPLSNQLLAVHINHGISGNSLNWQRHCEQLCLDLGIAFIAKAIEFDRSANVEEAARNARYDFFSSLLEDNDCLVLGHHLDDQAETVLLQLFRGAGVDGLAAMQECSNLGAGQLARPFLTCPRVELEHYARIHELKWIEDESNQDTKYSRNYLRHRVMPLLLEKWPGVAGNISRAATHCQQAKANLEVLAIKDCPDLLNATDHLLIEPIKGLEFERITNVLKFWLKKNRIQLPSSKTFHRIIHEIIFAKLDAMPTVSWNQIQVRRFQQHLYLLKADQINLPKAIKWQQFPASLTYPDADIKLSAVKAQKGLMIPKDAQIEIRFRKGGEEIYWHGQTKHLKKLFQEWQIPPWVRDRVPLVYINDQLACVVGYAVSDLFFTTNPLEAWSIVNNS.

27-32 lines the ATP pocket; sequence SGGLDS.

It belongs to the tRNA(Ile)-lysidine synthase family.

The protein resides in the cytoplasm. The catalysed reaction is cytidine(34) in tRNA(Ile2) + L-lysine + ATP = lysidine(34) in tRNA(Ile2) + AMP + diphosphate + H(+). Ligates lysine onto the cytidine present at position 34 of the AUA codon-specific tRNA(Ile) that contains the anticodon CAU, in an ATP-dependent manner. Cytidine is converted to lysidine, thus changing the amino acid specificity of the tRNA from methionine to isoleucine. The polypeptide is tRNA(Ile)-lysidine synthase (Legionella pneumophila subsp. pneumophila (strain Philadelphia 1 / ATCC 33152 / DSM 7513)).